The primary structure comprises 216 residues: uncharacterized protein (216 aa).

Residues 1–17 (MLKKIIILFLGMFLLSA) form the signal peptide. Cys18 carries the N-palmitoyl cysteine lipid modification. Cys18 is lipidated: S-diacylglycerol cysteine. Residues 133–162 (SDKEKKIQEELNQIKAMLRETKRDISKYTC) adopt a coiled-coil conformation.

The protein localises to the cell membrane. This is an uncharacterized protein from Rickettsia conorii (strain ATCC VR-613 / Malish 7).